The primary structure comprises 429 residues: MYRLIQNGQLLIDDQLVKRDIAIDEKGRITAIEAQITPTDEPTETIFDAQGALVSAGLIDGHVHFRDPGFTDKETLQTGSQAAAHGGYTSVIAMPNLNPVPDNLSDFKTLVARNQTETSVHTYQFAPITGDLVNNDLVDMPAFKAAGAAGFTNDGHGVQDAQTMYLAMQQAAAIDAPIVAHVEDISLVNGGVIHDGAAAKRLNVPGIPSVSESAQVARDIELARATGVHYHICHISTKETVALVRRAKADGVNITCEVTPHHLLLDDRSIISDDTMLKMNPPLRTLADRQSLWAGLMDGTIDVIATDHAPHTAAEKSQSLLQAPFGIVGSETAFSLLYTHLVVNGPFSLAQLLAKMTTVPAQVFNLPAAGQLRVGDQADIAVFNLTQPTTIQATDFQSKGHNTPFIGETVLGGTELTLVAGQVAYQRSK.

2 residues coordinate Zn(2+): H62 and H64. Substrate-binding positions include 64–66 (HFR) and N96. Residues D154, H181, and H234 each coordinate Zn(2+). Residue N280 coordinates substrate. D307 provides a ligand contact to Zn(2+). D307 is a catalytic residue. Substrate contacts are provided by residues H311 and 325 to 326 (FG).

This sequence belongs to the metallo-dependent hydrolases superfamily. DHOase family. Class I DHOase subfamily. It depends on Zn(2+) as a cofactor.

The enzyme catalyses (S)-dihydroorotate + H2O = N-carbamoyl-L-aspartate + H(+). The protein operates within pyrimidine metabolism; UMP biosynthesis via de novo pathway; (S)-dihydroorotate from bicarbonate: step 3/3. Its function is as follows. Catalyzes the reversible cyclization of carbamoyl aspartate to dihydroorotate. The chain is Dihydroorotase from Latilactobacillus sakei subsp. sakei (strain 23K) (Lactobacillus sakei subsp. sakei).